We begin with the raw amino-acid sequence, 414 residues long: 3-oxoacyl-[acyl-carrier-protein] synthase 2 (414 aa).

The Ketosynthase family 3 (KS3) domain maps to 4-411; sequence NKRVVITGMG…GHNAVLVFKK (408 aa). Residues cysteine 165, histidine 304, and histidine 341 each act as for beta-ketoacyl synthase activity in the active site.

The protein belongs to the thiolase-like superfamily. Beta-ketoacyl-ACP synthases family.

It carries out the reaction a fatty acyl-[ACP] + malonyl-[ACP] + H(+) = a 3-oxoacyl-[ACP] + holo-[ACP] + CO2. It catalyses the reaction (9Z)-hexadecenoyl-[ACP] + malonyl-[ACP] + H(+) = 3-oxo-(11Z)-octadecenoyl-[ACP] + holo-[ACP] + CO2. It functions in the pathway lipid metabolism; fatty acid biosynthesis. Involved in the type II fatty acid elongation cycle. Catalyzes the elongation of a wide range of acyl-ACP by the addition of two carbons from malonyl-ACP to an acyl acceptor. Can efficiently catalyze the conversion of palmitoleoyl-ACP (cis-hexadec-9-enoyl-ACP) to cis-vaccenoyl-ACP (cis-octadec-11-enoyl-ACP), an essential step in the thermal regulation of fatty acid composition. The chain is 3-oxoacyl-[acyl-carrier-protein] synthase 2 (fabF) from Staphylococcus aureus (strain Mu50 / ATCC 700699).